We begin with the raw amino-acid sequence, 251 residues long: uncharacterized protein (251 aa).

The next 7 membrane-spanning stretches (helical) occupy residues 48–68 (WMVG…VELI), 88–108 (VLWG…LVAN), 110–130 (IPLL…FIWV), 132–152 (AMVW…GSSF), 158–178 (IGVS…GLFV), 184–204 (IIGC…MPVL), and 209–229 (GVSW…AYLL).

To M.tuberculosis Rv1337.

Its subcellular location is the cell membrane. This is an uncharacterized protein from Mycobacterium leprae (strain TN).